A 683-amino-acid chain; its full sequence is DNA ligase (683 aa).

Residues 44–48 (DAEYD), 93–94 (SL), and Glu127 each bind NAD(+). The active-site N6-AMP-lysine intermediate is the Lys129. The NAD(+) site is built by Arg150, Glu187, Lys302, and Lys326. Zn(2+) contacts are provided by Cys420, Cys423, Cys438, and Cys444. Residues 601–683 (RVGGRLAGLT…SKLLATGGNQ (83 aa)) form the BRCT domain.

Belongs to the NAD-dependent DNA ligase family. LigA subfamily. Mg(2+) is required as a cofactor. Requires Mn(2+) as cofactor.

The catalysed reaction is NAD(+) + (deoxyribonucleotide)n-3'-hydroxyl + 5'-phospho-(deoxyribonucleotide)m = (deoxyribonucleotide)n+m + AMP + beta-nicotinamide D-nucleotide.. DNA ligase that catalyzes the formation of phosphodiester linkages between 5'-phosphoryl and 3'-hydroxyl groups in double-stranded DNA using NAD as a coenzyme and as the energy source for the reaction. It is essential for DNA replication and repair of damaged DNA. The polypeptide is DNA ligase (Trichlorobacter lovleyi (strain ATCC BAA-1151 / DSM 17278 / SZ) (Geobacter lovleyi)).